The sequence spans 497 residues: Serine/threonine-protein phosphatase 2A 56 kDa regulatory subunit beta isoform (497 aa).

The span at 1 to 19 (METKLPPASTPTSPSSPGL) shows a compositional bias: low complexity. Disordered stretches follow at residues 1-55 (METK…YQSN) and 475-497 (TQGAKEAPLQRLTPQVAASGGQS). 6 positions are modified to phosphoserine; by CLK2: serine 32, serine 35, serine 44, serine 46, serine 47, and serine 48. The span at 34 to 45 (RSLRRARPRRSH) shows a compositional bias: basic residues.

Belongs to the phosphatase 2A regulatory subunit B56 family. As to quaternary structure, component of the serine/threonine-protein phosphatase 2A complex (PP2A). This complex consists of a common heterodimeric core enzyme, composed of a 36 kDa catalytic subunit (subunit C) and a 65 kDa constant scaffold subunit (PR65 or subunit A), that associates with a variety of regulatory subunits. Proteins that associate with the core dimer include three families of regulatory subunits B (the R2/B/PR55/B55, R3/B''/PR72/PR130/PR59 and R5/B'/B56 families), the 48 kDa variable regulatory subunit, viral proteins, and cell signaling molecules. Interacts with SGO1. Interacts with AKT1. Interacts with CUL3 and KLHL15; this interaction leads to proteasomal degradation. Ubiquitinated by E3 CUL3-KLHL15 complex; this modification leads to proteasomal degradation. Highest expression in brain.

The protein resides in the cytoplasm. In terms of biological role, as the regulatory component of the serine/threonine-protein phosphatase 2A (PP2A) holoenzyme, modulates substrate specificity, subcellular localization, and responsiveness to phosphorylation. The phosphorylated form mediates the interaction between PP2A and AKT1, leading to AKT1 dephosphorylation. In Homo sapiens (Human), this protein is Serine/threonine-protein phosphatase 2A 56 kDa regulatory subunit beta isoform (PPP2R5B).